We begin with the raw amino-acid sequence, 613 residues long: RUN domain-containing protein 1 (613 aa).

The interval 15–36 (AAVGPKAKDEEEEEEEPLPPCE) is disordered. A Phosphothreonine modification is found at Thr54. The span at 57–69 (LEEATAEEPGAAP) shows a compositional bias: low complexity. Disordered regions lie at residues 57 to 79 (LEEA…PGRT), 140 to 177 (YEGP…RLET), and 305 to 330 (GKTG…KAED). A phosphoserine mark is found at Ser71 and Ser75. Positions 159-177 (PWLRGEDQSEQEKQERLET) are enriched in basic and acidic residues. Positions 160–235 (WLRGEDQSEQ…IKKLDMNLNE (76 aa)) form a coiled coil. Residues 309–325 (NGCSRTGSSRTPPGNSK) are compositionally biased toward polar residues. The RUN domain maps to 421 to 602 (ELTMAVRKEL…LKFSLPVDLA (182 aa)). A Phosphoserine modification is found at Ser497.

May play a role as p53/TP53 inhibitor and thus may have oncogenic activity. In Homo sapiens (Human), this protein is RUN domain-containing protein 1 (RUNDC1).